Consider the following 263-residue polypeptide: MSTSIKAIKESLEAVTSLSDPLFQELATDARLGVQKALKSRQKAIQADLAEEERLEAMLSYEKALYKEGYQAIAGIDEVGRGPLAGPVVAACVILPQHCKIKGLNDSKKIPKSKHETIYQAVKEKALAIGIGIIDNQLIDEVNIYEATKLAMLEAIKQLEGQLTQPDYLLIDAMTLDIAISQQSILKGDANSLSIAAASIVAKVTRDQMMANYDRIFPGYGFAKNAGYGTKEHLQGLKAYGITPIHRKSFEPVKSMCCDSTNP.

The 192-residue stretch at 71-262 (QAIAGIDEVG…VKSMCCDSTN (192 aa)) folds into the RNase H type-2 domain. The a divalent metal cation site is built by aspartate 77, glutamate 78, and aspartate 172.

The protein belongs to the RNase HII family. It depends on Mn(2+) as a cofactor. Mg(2+) is required as a cofactor.

The protein localises to the cytoplasm. The enzyme catalyses Endonucleolytic cleavage to 5'-phosphomonoester.. Functionally, endonuclease that specifically degrades the RNA of RNA-DNA hybrids. The polypeptide is Ribonuclease HII (Streptococcus pyogenes serotype M5 (strain Manfredo)).